We begin with the raw amino-acid sequence, 154 residues long: Myoglobin (154 aa).

One can recognise a Globin domain in the interval 2 to 148 (GLSDGEWQIV…FRNDIAAKYK (147 aa)). Position 4 is a phosphoserine (Ser-4). His-65 is a binding site for nitrite. O2 is bound at residue His-65. At Thr-68 the chain carries Phosphothreonine. His-94 contacts heme b.

This sequence belongs to the globin family. In terms of assembly, monomeric.

It localises to the cytoplasm. The protein resides in the sarcoplasm. It catalyses the reaction Fe(III)-heme b-[protein] + nitric oxide + H2O = Fe(II)-heme b-[protein] + nitrite + 2 H(+). It carries out the reaction H2O2 + AH2 = A + 2 H2O. Its function is as follows. Monomeric heme protein which primary function is to store oxygen and facilitate its diffusion within muscle tissues. Reversibly binds oxygen through a pentacoordinated heme iron and enables its timely and efficient release as needed during periods of heightened demand. Depending on the oxidative conditions of tissues and cells, and in addition to its ability to bind oxygen, it also has a nitrite reductase activity whereby it regulates the production of bioactive nitric oxide. Under stress conditions, like hypoxia and anoxia, it also protects cells against reactive oxygen species thanks to its pseudoperoxidase activity. This is Myoglobin (MB) from Lycaon pictus (African wild dog).